Reading from the N-terminus, the 286-residue chain is Energy-coupling factor transporter ATP-binding protein EcfA2 (286 aa).

The region spanning Ile3–Ala245 is the ABC transporter domain. Gly40 to Ser47 lines the ATP pocket.

The protein belongs to the ABC transporter superfamily. Energy-coupling factor EcfA family. As to quaternary structure, forms a stable energy-coupling factor (ECF) transporter complex composed of 2 membrane-embedded substrate-binding proteins (S component), 2 ATP-binding proteins (A component) and 2 transmembrane proteins (T component).

It localises to the cell membrane. Functionally, ATP-binding (A) component of a common energy-coupling factor (ECF) ABC-transporter complex. Unlike classic ABC transporters this ECF transporter provides the energy necessary to transport a number of different substrates. This is Energy-coupling factor transporter ATP-binding protein EcfA2 from Clostridium acetobutylicum (strain ATCC 824 / DSM 792 / JCM 1419 / IAM 19013 / LMG 5710 / NBRC 13948 / NRRL B-527 / VKM B-1787 / 2291 / W).